Consider the following 259-residue polypeptide: MWTWKADRPVAVIVIIHGASEYHGRYKWLIEMWRSSGYHVVMGDLPGQGTTTRARGHIRSFQEYIDEVDAWIDKARTFDLPVFLLGHSMGGLVAIEWVKQQRNPRITGIILSSPCLGLQIKVNKALDLASKGLNVIAPSLKVDSGLSIDMATRNEDVIEADQNDSLYVRKVSVRWYRELLKTIESAMVPTEAFLKVPLLVMQAGDDKLVDKTMVIKWFNGVASHNKAYREWEGLYHEIFNEPEREDVFKAARAFTDQYI.

The active-site Nucleophile is Ser-88. Residues Asp-206 and His-236 each act as charge relay system in the active site.

Belongs to the AB hydrolase superfamily.

It participates in antibiotic biosynthesis; bacilysocin biosynthesis. In terms of biological role, phospholipase involved in the biosynthesis of the antibiotic bacilysocin. It probably catalyzes the hydrolysis of the 2-sn-acyl moiety of phosphatidylglycerol to produce bacilysocin (lysophosphatidylglycerol). Is also able to catalyze the hydrolysis reaction of one acyl bond in phosphatidylcholine in vitro (actual cleavage point is unknown), resulting in lysophosphatidylcholine. This chain is Phospholipase YtpA (ytpA), found in Bacillus subtilis (strain 168).